Consider the following 593-residue polypeptide: Histone-arginine methyltransferase CARMER (593 aa).

An SAM-dependent MTase PRMT-type domain is found at 122–429 (ASQYFQFYGY…QRQSYDVEMD (308 aa)). The S-adenosyl-L-methionine site is built by Q135, R144, G168, E190, E219, and T247. R482 is modified (asymmetric dimethylarginine; by autocatalysis). Residues 521–540 (LISSTGRQQSQQQTTPAQPL) are disordered. The segment covering 523–535 (SSTGRQQSQQQTT) has biased composition (low complexity).

It belongs to the class I-like SAM-binding methyltransferase superfamily. Protein arginine N-methyltransferase family. In terms of assembly, homodimer. Post-translationally, the dimethylated protein is the major form.

The protein resides in the cytoplasm. The protein localises to the nucleus. It carries out the reaction L-arginyl-[protein] + 2 S-adenosyl-L-methionine = N(omega),N(omega)-dimethyl-L-arginyl-[protein] + 2 S-adenosyl-L-homocysteine + 2 H(+). Functionally, methylates (mono- and asymmetric dimethylation) the guanidino nitrogens of arginyl residues in proteins. May methylate histone H3 at 'Arg-17' and activate transcription via chromatin remodeling. This chain is Histone-arginine methyltransferase CARMER, found in Aedes aegypti (Yellowfever mosquito).